Here is a 395-residue protein sequence, read N- to C-terminus: Inner membrane protein YjgN (395 aa).

At 1–24 the chain is on the cytoplasmic side; that stretch reads MNNVISSKDNHNHTLVFTGKGGKY. A helical membrane pass occupies residues 25 to 45; that stretch reads FVICLVNFLLTCITLGIYAPW. Over 46–71 the chain is Periplasmic; sequence AMVKCRRYIYTNMTLNNQPFAYKATG. Residues 72-92 traverse the membrane as a helical segment; sequence GALFISVLLVFIIYIVSLSLI. The Cytoplasmic segment spans residues 93-95; that stretch reads EHG. The chain crosses the membrane as a helical span at residues 96–116; that stretch reads HPGLGFTLFGLLIAIIPFMAV. At 117 to 146 the chain is on the periplasmic side; that stretch reads KGLQYQAMMTSLNGVHFGFQCSMRRAWWYM. Residues 147 to 167 form a helical membrane-spanning segment; sequence FALPVLLMVALYIVLYIISLV. A topological domain (cytoplasmic) is located at residue threonine 168. A helical membrane pass occupies residues 169–189; it reads IAVGGLVFSIVFLGLLAIIGI. Over 190–229 the chain is Periplasmic; that stretch reads GVINGITYSKWMTLFGNGANFGIHRFSIQVNVKTCIRGCV. A helical membrane pass occupies residues 230-250; the sequence is LAMLTLFPFAVVIGYLIAPVF. The Cytoplasmic segment spans residues 251-275; that stretch reads TDMILLSMMGNAQAGGALILQYYGQ. Residues 276 to 296 form a helical membrane-spanning segment; sequence IMACYFLYFLAIIVVTSYLYV. The Periplasmic portion of the chain corresponds to 297–327; it reads ALRNLFLNNLSLANDSIRFHSSVTAHGMLWR. Residues 328 to 348 traverse the membrane as a helical segment; it reads LLVVFVISGVTLGLAYPWLKI. At 349–395 the chain is on the cytoplasmic side; sequence WLVSWLAQNTQVQGDLDSLELTNDEKPLENSPLMWISRGIMPYFPFI.

The protein localises to the cell inner membrane. In Salmonella typhimurium (strain LT2 / SGSC1412 / ATCC 700720), this protein is Inner membrane protein YjgN (yjgN).